A 35-amino-acid polypeptide reads, in one-letter code: Photosystem II reaction center protein T (35 aa).

The chain crosses the membrane as a helical span at residues 3–23 (ALVYTFLLVSTLGIIFFAIFF).

This sequence belongs to the PsbT family. In terms of assembly, PSII is composed of 1 copy each of membrane proteins PsbA, PsbB, PsbC, PsbD, PsbE, PsbF, PsbH, PsbI, PsbJ, PsbK, PsbL, PsbM, PsbT, PsbY, PsbZ, Psb30/Ycf12, at least 3 peripheral proteins of the oxygen-evolving complex and a large number of cofactors. It forms dimeric complexes.

It localises to the plastid. It is found in the chloroplast thylakoid membrane. In terms of biological role, found at the monomer-monomer interface of the photosystem II (PS II) dimer, plays a role in assembly and dimerization of PSII. PSII is a light-driven water plastoquinone oxidoreductase, using light energy to abstract electrons from H(2)O, generating a proton gradient subsequently used for ATP formation. The sequence is that of Photosystem II reaction center protein T from Drimys granadensis.